Consider the following 763-residue polypeptide: MSELLSFALFLASVLIYAWKAGRNTWWFAATLTVLGLFVVLNITLFASDYFTGAGINDAVLYTLTNSLTGAGVSKYILPGIGIVLGLTAVFGALGWILRRRRHHPHHFGYSLLALLLALGSVDASPAFRQITELVKSQSRDGDPDFAAYYKEPSKTIPDPKLNLVYIYGESLERTYFDNEAFPDLTPELGALKNEGLDFSHTQQLPGTDYTIAGMVASQCGIPLFAPFEGNASASVSSFFPQNICLGDILKNSGYQNYFVQGANLRFAGKDVFLKSHGFDHLYGSEELKSVVADPHYRNDWGFYDDTVLDEAWKKFEELSRSGQRFSLFTLTVDTHHPDGFISRTCNRKKYDFDGKPNQSFSAVSCSQENIAAFINKIKASPWFKDTVIVVSSDHLAMNNTAWKYLNKQDRNNLFFVIRGDKPQQETLAVKRNTMDNGATVLDILGGDNYLGLGRSSLSGQSMSEIFLNIKEKTLAWKPDIIRLWKFPKEMKEFTIDQQKNIIAFSGSHFRLPLLLRVSDKRVEPLPESEYSAPLRFQLADFAPRDNFVWVDRCYKMAQLWAPELALSTDWCVSQGQLGGQQIVQHVDKTTWQGKTAFKDTVIDMARYKGNVDTLKIVDNDIRYKADSFIFNVAGAPEEVKQFSGISRPESWGRWSNAQLGDEVKIEYKHPLPKKFDLVITAKAYGNNASRPIPVRVGNEEQTLVLGNEVTTTTLHFDNPTDADTLVIVPPEPVSTNEGNILGHSPRKLGIGMVEIKVVEREG.

4 helical membrane passes run 1–21 (MSEL…AWKA), 26–46 (WWFA…ITLF), 77–97 (ILPG…LGWI), and 108–128 (FGYS…SPAF).

The protein belongs to the OpgB family.

The protein resides in the cell inner membrane. It carries out the reaction a phosphatidylglycerol + a membrane-derived-oligosaccharide D-glucose = a 1,2-diacyl-sn-glycerol + a membrane-derived-oligosaccharide 6-(glycerophospho)-D-glucose.. The protein operates within glycan metabolism; osmoregulated periplasmic glucan (OPG) biosynthesis. Its function is as follows. Transfers a phosphoglycerol residue from phosphatidylglycerol to the membrane-bound nascent glucan backbones. This Escherichia coli O139:H28 (strain E24377A / ETEC) protein is Phosphoglycerol transferase I.